The primary structure comprises 172 residues: Adenine phosphoribosyltransferase (172 aa).

Belongs to the purine/pyrimidine phosphoribosyltransferase family. Homodimer.

The protein resides in the cytoplasm. It catalyses the reaction AMP + diphosphate = 5-phospho-alpha-D-ribose 1-diphosphate + adenine. It functions in the pathway purine metabolism; AMP biosynthesis via salvage pathway; AMP from adenine: step 1/1. In terms of biological role, catalyzes a salvage reaction resulting in the formation of AMP, that is energically less costly than de novo synthesis. This is Adenine phosphoribosyltransferase from Pediococcus pentosaceus (strain ATCC 25745 / CCUG 21536 / LMG 10740 / 183-1w).